The sequence spans 629 residues: tRNA uridine 5-carboxymethylaminomethyl modification enzyme MnmG (629 aa).

Residues 13–18 (GGGHAG), Val125, and Ser180 contribute to the FAD site. 273 to 287 (GPRYCPSIEDKVMRF) is an NAD(+) binding site. Gln370 serves as a coordination point for FAD.

The protein belongs to the MnmG family. Homodimer. Heterotetramer of two MnmE and two MnmG subunits. The cofactor is FAD.

The protein resides in the cytoplasm. Its function is as follows. NAD-binding protein involved in the addition of a carboxymethylaminomethyl (cmnm) group at the wobble position (U34) of certain tRNAs, forming tRNA-cmnm(5)s(2)U34. In Serratia proteamaculans (strain 568), this protein is tRNA uridine 5-carboxymethylaminomethyl modification enzyme MnmG.